The primary structure comprises 271 residues: Proteasome inhibitor PI31 subunit (271 aa).

Ala2 carries the N-acetylalanine modification. The tract at residues 2 to 150 (AGLEVLFASA…PIHEQWEKAN (149 aa)) is important for homodimerization and interaction with FBXO7. Ser153 is modified (phosphoserine). Arg205 is subject to Omega-N-methylarginine. Arg219 bears the Asymmetric dimethylarginine mark. Positions 222 to 271 (IDPSSGLPNRLPPGAVPPGARFDPFGPIGTSPPGPNPDHLPPPGYDDMYL) are disordered. Omega-N-methylarginine is present on Arg231. The span at 251–265 (TSPPGPNPDHLPPPG) shows a compositional bias: pro residues. Ser252 bears the Phosphoserine mark.

Belongs to the proteasome inhibitor PI31 family. In terms of assembly, monomer and homodimer. Interacts with FBXO7.

The protein localises to the cytoplasm. The protein resides in the endoplasmic reticulum. Functionally, plays an important role in control of proteasome function. Inhibits the hydrolysis of protein and peptide substrates by the 20S proteasome. Also inhibits the activation of the proteasome by the proteasome regulatory proteins PA700 and PA28. This chain is Proteasome inhibitor PI31 subunit (PSMF1), found in Pongo abelii (Sumatran orangutan).